The chain runs to 252 residues: Triosephosphate isomerase (252 aa).

Asn-10–Lys-12 provides a ligand contact to substrate. The Electrophile role is filled by His-96. Residue Glu-168 is the Proton acceptor of the active site. Residues Gly-174, Ser-214, and Gly-235–Gly-236 contribute to the substrate site.

This sequence belongs to the triosephosphate isomerase family. Homodimer.

The protein resides in the cytoplasm. The enzyme catalyses D-glyceraldehyde 3-phosphate = dihydroxyacetone phosphate. It participates in carbohydrate biosynthesis; gluconeogenesis. The protein operates within carbohydrate degradation; glycolysis; D-glyceraldehyde 3-phosphate from glycerone phosphate: step 1/1. Its function is as follows. Involved in the gluconeogenesis. Catalyzes stereospecifically the conversion of dihydroxyacetone phosphate (DHAP) to D-glyceraldehyde-3-phosphate (G3P). The sequence is that of Triosephosphate isomerase from Lactococcus lactis subsp. lactis (strain IL1403) (Streptococcus lactis).